Here is a 377-residue protein sequence, read N- to C-terminus: MMARWCVGWPAAARGGRDELTWQAELTAHAAGEFSMAAAQANAVMEDQAQVMASPGATLVGVYDGHGGPDASRFLRSRLFPLIHEFAAERGGAVDADVIRKAFLAADEEYLQLLRWSLPNMSRAAASGSCCLLGAISGDTLYVANAGDSRAVLGRRAAAGQTVAERLSTEHNVASEEVRRELAALHPDDGEVVVHARGAWRVKGIIQVARAIGDVYLKTPEFKRDPAVQRLCSAAAAVELARPVVTAEPSIHARKLKAGVDLFVVFASDGLWEHLSDEAAVQLVSKSSTRRGVAARLVQAALGEAARKREVRRGDLRRIERGVRRHFHDDITAVVVFLDLDDDGGRRARRRGRVVDSSSSSCSNTPLDVYSLYNSTA.

In terms of domain architecture, PPM-type phosphatase spans 30–338; sequence AAGEFSMAAA…DDITAVVVFL (309 aa). Positions 64, 65, 269, and 329 each coordinate Mn(2+).

It belongs to the PP2C family. It depends on Mg(2+) as a cofactor. Mn(2+) is required as a cofactor.

It catalyses the reaction O-phospho-L-seryl-[protein] + H2O = L-seryl-[protein] + phosphate. The enzyme catalyses O-phospho-L-threonyl-[protein] + H2O = L-threonyl-[protein] + phosphate. This Oryza sativa subsp. japonica (Rice) protein is Probable protein phosphatase 2C 61.